The chain runs to 228 residues: Probable septum site-determining protein MinC (228 aa).

Belongs to the MinC family. Interacts with MinD and FtsZ.

Cell division inhibitor that blocks the formation of polar Z ring septums. Rapidly oscillates between the poles of the cell to destabilize FtsZ filaments that have formed before they mature into polar Z rings. Prevents FtsZ polymerization. This Symbiobacterium thermophilum (strain DSM 24528 / JCM 14929 / IAM 14863 / T) protein is Probable septum site-determining protein MinC.